The chain runs to 512 residues: Alanine--glyoxylate aminotransferase 2, mitochondrial (512 aa).

The N-terminal 39 residues, 1–39, are a transit peptide targeting the mitochondrion; that stretch reads MSLAWRTLQKAFYLETSLRILQMRPSLSCASRIYVPKLT. At Lys55 the chain carries N6-acetyllysine. Lys69 carries the post-translational modification N6-acetyllysine; alternate. Lys69 is modified (N6-succinyllysine; alternate). Lys82 is modified (N6-acetyllysine). Lys260 bears the N6-acetyllysine; alternate mark. At Lys260 the chain carries N6-succinyllysine; alternate. Residue Lys302 is modified to N6-succinyllysine. Position 348 is an N6-(pyridoxal phosphate)lysine (Lys348). Residues Lys415 and Lys418 each carry the N6-acetyllysine; alternate modification. Lys415 and Lys418 each carry N6-succinyllysine; alternate. N6-acetyllysine is present on Lys452.

This sequence belongs to the class-III pyridoxal-phosphate-dependent aminotransferase family. Homotetramer. Requires pyridoxal 5'-phosphate as cofactor. Expressed in the liver, lung and kidney.

Its subcellular location is the mitochondrion. The enzyme catalyses glyoxylate + L-alanine = glycine + pyruvate. The catalysed reaction is (R)-3-amino-2-methylpropanoate + pyruvate = 2-methyl-3-oxopropanoate + L-alanine. It catalyses the reaction 3-oxopropanoate + L-alanine = beta-alanine + pyruvate. It carries out the reaction 2-oxobutanoate + L-alanine = (2S)-2-aminobutanoate + pyruvate. The enzyme catalyses N(omega),N(omega)-dimethyl-L-arginine + pyruvate = 5-(3,3-dimethylguanidino)-2-oxopentanoate + L-alanine. The catalysed reaction is N(omega),N('omega)-dimethyl-L-arginine + pyruvate = 5-(3,3'-dimethylguanidino)-2-oxopentanoate + L-alanine. It catalyses the reaction N(omega),N(omega)-dimethyl-L-arginine + glyoxylate = 5-(3,3-dimethylguanidino)-2-oxopentanoate + glycine. It carries out the reaction N(omega),N('omega)-dimethyl-L-arginine + glyoxylate = 5-(3,3'-dimethylguanidino)-2-oxopentanoate + glycine. The enzyme catalyses N(omega)-methyl-L-arginine + pyruvate = 5-(3-methylguanidino)-2-oxopentanoate + L-alanine. The catalysed reaction is N(omega)-methyl-L-arginine + glyoxylate = 5-(3-methylguanidino)-2-oxopentanoate + glycine. It catalyses the reaction L-ornithine + pyruvate = 5-amino-2-oxopentanoate + L-alanine. It carries out the reaction L-ornithine + glyoxylate = 5-amino-2-oxopentanoate + glycine. The enzyme catalyses (2S)-2-aminobutanoate + glyoxylate = 2-oxobutanoate + glycine. The catalysed reaction is N(omega),N(omega)-dimethyl-L-arginine + oxaloacetate = 5-(3,3-dimethylguanidino)-2-oxopentanoate + L-aspartate. It catalyses the reaction oxaloacetate + L-alanine = L-aspartate + pyruvate. It carries out the reaction N(omega),N(omega)-dimethyl-L-arginine + 2-oxobutanoate = 5-(3,3-dimethylguanidino)-2-oxopentanoate + (2S)-2-aminobutanoate. The enzyme catalyses 2-oxopentanoate + N(omega),N(omega)-dimethyl-L-arginine = 5-(3,3-dimethylguanidino)-2-oxopentanoate + L-2-aminopentanoate. The catalysed reaction is 2-oxohexanoate + N(omega),N(omega)-dimethyl-L-arginine = L-2-aminohexanoate + 5-(3,3-dimethylguanidino)-2-oxopentanoate. With respect to regulation, inhibited by 5-fluorouracil and 6-fluorouracil. Inhibited by phenylhydrazine, hydroxylamine, l-amino-L-proline, para-chloromercuribenzoate and HgCl2. Its function is as follows. Multifunctional aminotransferase with a broad substrate specificity. Catalyzes the conversion of glyoxylate to glycine using alanine as the amino donor. Catalyzes metabolism of not L- but the D-isomer of D-beta-aminoisobutyric acid to generate 2-methyl-3-oxopropanoate and alanine. Catalyzes the transfer of the amino group from beta-alanine to pyruvate to yield L-alanine and 3-oxopropanoate. Can metabolize NG-monomethyl-L-arginine (NMMA), asymmetric NG,NG-dimethyl-L-arginine (ADMA) and symmetric NG,N'G-dimethyl-L-arginine (SDMA). ADMA is a potent inhibitor of nitric-oxide (NO) synthase, and this activity provides mechanism through which the kidney regulates blood pressure. The polypeptide is Alanine--glyoxylate aminotransferase 2, mitochondrial (Agxt2) (Rattus norvegicus (Rat)).